Consider the following 453-residue polypeptide: Chromosomal replication initiator protein DnaA (453 aa).

The interval 1–78 (MTENEQLFWN…FEIFNAEITA (78 aa)) is domain I, interacts with DnaA modulators. A domain II region spans residues 78-112 (ANYVSNDLHLQETSFSNYQQSSNEVNTLPIRKIDS). Positions 113–331 (NLKEKYTFAN…GALKNISLVA (219 aa)) are domain III, AAA+ region. ATP is bound by residues Gly157, Gly159, Lys160, and Thr161. Positions 332–453 (DFKHAKTITV…EIETIKNKIR (122 aa)) are domain IV, binds dsDNA.

Belongs to the DnaA family. In terms of assembly, oligomerizes as a right-handed, spiral filament on DNA at oriC.

The protein resides in the cytoplasm. In terms of biological role, plays an essential role in the initiation and regulation of chromosomal replication. ATP-DnaA binds to the origin of replication (oriC) to initiate formation of the DNA replication initiation complex once per cell cycle. Binds the DnaA box (a 9 base pair repeat at the origin) and separates the double-stranded (ds)DNA. Forms a right-handed helical filament on oriC DNA; dsDNA binds to the exterior of the filament while single-stranded (ss)DNA is stabiized in the filament's interior. The ATP-DnaA-oriC complex binds and stabilizes one strand of the AT-rich DNA unwinding element (DUE), permitting loading of DNA polymerase. After initiation quickly degrades to an ADP-DnaA complex that is not apt for DNA replication. Binds acidic phospholipids. This Streptococcus agalactiae serotype Ia (strain ATCC 27591 / A909 / CDC SS700) protein is Chromosomal replication initiator protein DnaA.